Here is a 179-residue protein sequence, read N- to C-terminus: Large ribosomal subunit protein uL6 (179 aa).

This sequence belongs to the universal ribosomal protein uL6 family. As to quaternary structure, part of the 50S ribosomal subunit.

Its function is as follows. This protein binds to the 23S rRNA, and is important in its secondary structure. It is located near the subunit interface in the base of the L7/L12 stalk, and near the tRNA binding site of the peptidyltransferase center. This is Large ribosomal subunit protein uL6 from Mycobacterium ulcerans (strain Agy99).